The chain runs to 291 residues: 4-hydroxy-tetrahydrodipicolinate synthase (291 aa).

Residue threonine 47 participates in pyruvate binding. The active-site Proton donor/acceptor is tyrosine 134. Lysine 162 serves as the catalytic Schiff-base intermediate with substrate. Isoleucine 205 contacts pyruvate.

Belongs to the DapA family. As to quaternary structure, homotetramer; dimer of dimers.

It localises to the cytoplasm. The catalysed reaction is L-aspartate 4-semialdehyde + pyruvate = (2S,4S)-4-hydroxy-2,3,4,5-tetrahydrodipicolinate + H2O + H(+). The protein operates within amino-acid biosynthesis; L-lysine biosynthesis via DAP pathway; (S)-tetrahydrodipicolinate from L-aspartate: step 3/4. In terms of biological role, catalyzes the condensation of (S)-aspartate-beta-semialdehyde [(S)-ASA] and pyruvate to 4-hydroxy-tetrahydrodipicolinate (HTPA). The sequence is that of 4-hydroxy-tetrahydrodipicolinate synthase from Methanosphaerula palustris (strain ATCC BAA-1556 / DSM 19958 / E1-9c).